Consider the following 226-residue polypeptide: Large ribosomal subunit protein uL1 (226 aa).

It belongs to the universal ribosomal protein uL1 family. Part of the 50S ribosomal subunit.

In terms of biological role, binds directly to 23S rRNA. The L1 stalk is quite mobile in the ribosome, and is involved in E site tRNA release. Functionally, protein L1 is also a translational repressor protein, it controls the translation of the L11 operon by binding to its mRNA. This chain is Large ribosomal subunit protein uL1, found in Buchnera aphidicola subsp. Cinara cedri (strain Cc).